The chain runs to 95 residues: Immunogenic miracidial antigen 8C (95 aa).

The span at 1–15 shows a compositional bias: polar residues; the sequence is EFTISFSSPVISTGQ. A disordered region spans residues 1–95; it reads EFTISFSSPV…PKKYGSGHKY (95 aa). Residues 20–41 show a composition bias toward acidic residues; that stretch reads GDEDYHDGDDDVDYTDDVDDVD. Residues 45–59 are compositionally biased toward polar residues; sequence GSPSQLLQGGYQRNQ.

Belongs to the immunogenic miracidial antigen family.

The chain is Immunogenic miracidial antigen 8C (8C) from Schistosoma japonicum (Blood fluke).